Here is a 328-residue protein sequence, read N- to C-terminus: m7GpppN-mRNA hydrolase NUDT17 (328 aa).

Residues 90–236 form the Nudix hydrolase domain; that stretch reads GVDLGVAVIL…DGTETPGLLP (147 aa). The Nudix box motif lies at 127-148; it reads GHVELEEELLDGGLRELWEESG. E142 and E146 together coordinate Mg(2+). Positions 299–328 are disordered; the sequence is PCKSAAYLDPGPAKEEWNMDPLPPNQGSGK.

It belongs to the Nudix hydrolase family. Mg(2+) is required as a cofactor. Mn(2+) serves as cofactor.

It catalyses the reaction a 5'-end (N(7)-methyl 5'-triphosphoguanosine)-ribonucleoside in mRNA + H2O = N(7)-methyl-GDP + a 5'-end phospho-ribonucleoside in mRNA + 2 H(+). Acts as a decapping enzyme capable of hydrolyzing monomethylated capped RNAs (in vitro). Hydrolyzes monomethylated capped RNA after alpha and beta phosphates to form N(7)-methyl-GDP. Shows low activity towards unmethylated capped RNA. The chain is m7GpppN-mRNA hydrolase NUDT17 (NUDT17) from Homo sapiens (Human).